Consider the following 710-residue polypeptide: Putative membrane protein IgaA homolog (710 aa).

A topological domain (periplasmic) is located at residue Met1. Residues Ser2–Phe22 traverse the membrane as a helical segment. Over Arg23–Arg204 the chain is Cytoplasmic. Transmembrane regions (helical) follow at residues Glu205 to Val225 and Phe226 to Phe246. The Cytoplasmic segment spans residues Ala247–Arg339. A helical membrane pass occupies residues Ser340–Leu360. The Periplasmic portion of the chain corresponds to Asp361–Leu656. Residues Gly657–Phe677 form a helical membrane-spanning segment. Over Arg678–Ile710 the chain is Cytoplasmic.

It belongs to the IgaA family.

It localises to the cell inner membrane. This chain is Putative membrane protein IgaA homolog (yrfF), found in Salmonella typhi.